The chain runs to 240 residues: Aspartate/glutamate leucyltransferase (240 aa).

It belongs to the R-transferase family. Bpt subfamily.

Its subcellular location is the cytoplasm. The enzyme catalyses N-terminal L-glutamyl-[protein] + L-leucyl-tRNA(Leu) = N-terminal L-leucyl-L-glutamyl-[protein] + tRNA(Leu) + H(+). The catalysed reaction is N-terminal L-aspartyl-[protein] + L-leucyl-tRNA(Leu) = N-terminal L-leucyl-L-aspartyl-[protein] + tRNA(Leu) + H(+). Functions in the N-end rule pathway of protein degradation where it conjugates Leu from its aminoacyl-tRNA to the N-termini of proteins containing an N-terminal aspartate or glutamate. In Bordetella avium (strain 197N), this protein is Aspartate/glutamate leucyltransferase.